Consider the following 341-residue polypeptide: Methionine import ATP-binding protein MetN 1 (341 aa).

Residues 2-241 enclose the ABC transporter domain; it reads IKLNQIVKRY…PQHEVTKRFV (240 aa). 38 to 45 serves as a coordination point for ATP; sequence GFSGAGKS.

Belongs to the ABC transporter superfamily. Methionine importer (TC 3.A.1.24) family. The complex is composed of two ATP-binding proteins (MetN), two transmembrane proteins (MetI) and a solute-binding protein (MetQ).

It is found in the cell membrane. The enzyme catalyses L-methionine(out) + ATP + H2O = L-methionine(in) + ADP + phosphate + H(+). It catalyses the reaction D-methionine(out) + ATP + H2O = D-methionine(in) + ADP + phosphate + H(+). Functionally, part of the ABC transporter complex MetNIQ involved in methionine import. Responsible for energy coupling to the transport system. This Staphylococcus epidermidis (strain ATCC 12228 / FDA PCI 1200) protein is Methionine import ATP-binding protein MetN 1.